A 106-amino-acid polypeptide reads, in one-letter code: Large ribosomal subunit protein bL21 (106 aa).

Belongs to the bacterial ribosomal protein bL21 family. In terms of assembly, part of the 50S ribosomal subunit. Contacts protein L20.

Its function is as follows. This protein binds to 23S rRNA in the presence of protein L20. The chain is Large ribosomal subunit protein bL21 from Dichelobacter nodosus (strain VCS1703A).